A 300-amino-acid chain; its full sequence is F-box/LRR-repeat protein 15 (300 aa).

At M1 the chain carries N-acetylmethionine. Residues 19–66 form the F-box domain; it reads LLDLPWEDVLLPHVLNWVPLRQLLRLQRVSRAFRALVQLHLARLRRFD. Residues 113–269 form an interaction with SMURF1 region; sequence NPQLRSVALA…EPSLSRLRKR (157 aa). LRR repeat units lie at residues 141 to 162, 167 to 188, 194 to 215, 220 to 241, and 246 to 267; these read RLQRLSLAHCDWVDGLALRGLA, ALEELDLTACRQLKDEAIVYLA, GLRSLSLAVNANVGDTAVQELA, QLEHLDLTGCLRVGSDGVRTLA, and ALRSLRVRHCHHVAEPSLSRLR.

Belongs to the FBXL15 family. As to quaternary structure, part of the SCF (SKP1-CUL1-F-box) E3 ubiquitin-protein ligase complex SCF(FBXL15) composed of CUL1, SKP1, RBX1 and FBXL15. In terms of tissue distribution, expressed in heart, liver, spleen, bone, muscle, brain and kidney (at protein level).

It is found in the cytoplasm. It participates in protein modification; protein ubiquitination. Substrate recognition component of a SCF (SKP1-CUL1-F-box protein) E3 ubiquitin-protein ligase complex which mediates the ubiquitination and subsequent proteasomal degradation of SMURF1, thereby acting as a positive regulator of the BMP signaling pathway. Required for dorsal/ventral pattern formation and bone mass maintenance. Also mediates ubiquitination of SMURF2 and WWP2. The protein is F-box/LRR-repeat protein 15 (Fbxl15) of Mus musculus (Mouse).